A 634-amino-acid chain; its full sequence is Chaperone protein HtpG (634 aa).

An a; substrate-binding region spans residues Met1–Arg342. The segment at Glu343–Gln559 is b. The segment at Leu560 to Ala634 is c.

The protein belongs to the heat shock protein 90 family. As to quaternary structure, homodimer.

It localises to the cytoplasm. Functionally, molecular chaperone. Has ATPase activity. This Xanthomonas campestris pv. campestris (strain 8004) protein is Chaperone protein HtpG.